A 114-amino-acid polypeptide reads, in one-letter code: Fluoride-specific ion channel FluC 1 (114 aa).

The next 3 membrane-spanning stretches (helical) occupy residues 28–48, 56–76, and 91–111; these read VFPW…GFLH, ILLL…TFQV, and IIYL…GSWL. 2 residues coordinate Na(+): glycine 66 and threonine 69.

It belongs to the fluoride channel Fluc/FEX (TC 1.A.43) family.

The protein localises to the cell membrane. It catalyses the reaction fluoride(in) = fluoride(out). With respect to regulation, na(+) is not transported, but it plays an essential structural role and its presence is essential for fluoride channel function. In terms of biological role, fluoride-specific ion channel. Important for reducing fluoride concentration in the cell, thus reducing its toxicity. This is Fluoride-specific ion channel FluC 1 from Ligilactobacillus salivarius (strain UCC118) (Lactobacillus salivarius).